The primary structure comprises 285 residues: Ribosomal protein L11 methyltransferase (285 aa).

Residues T131, G154, D176, and N223 each coordinate S-adenosyl-L-methionine.

The protein belongs to the methyltransferase superfamily. PrmA family.

It is found in the cytoplasm. It carries out the reaction L-lysyl-[protein] + 3 S-adenosyl-L-methionine = N(6),N(6),N(6)-trimethyl-L-lysyl-[protein] + 3 S-adenosyl-L-homocysteine + 3 H(+). Methylates ribosomal protein L11. The chain is Ribosomal protein L11 methyltransferase from Brucella melitensis biotype 2 (strain ATCC 23457).